We begin with the raw amino-acid sequence, 182 residues long: MQAINRIIAPLKRGLQLLVSRAVVSVVNDAYARQNLQLRLQSEEVADDVERFQNYGHYSVPKAGEAIVVSVGGKRSHLVAVVVDDKSVRPAGLIAGDSVLYHLEGHQLRLTENGEAILSCKKFTIETDTLDCSAQQITFDSPQTTFTGNVDIMGISTATDHQSSGISGKNHDHEERVGKPVP.

The tract at residues Thr159–Pro182 is disordered. The span at Lys169–Pro182 shows a compositional bias: basic and acidic residues.

It to phage Mu protein gp45.

The polypeptide is Mu-like prophage FluMu protein gp45 (Haemophilus influenzae (strain ATCC 51907 / DSM 11121 / KW20 / Rd)).